The chain runs to 205 residues: Small ribosomal subunit protein uS4c (205 aa).

The disordered stretch occupies residues 22–42 (TSKISKKTNTPGEHGQPQNKL). Polar residues predominate over residues 28–42 (KTNTPGEHGQPQNKL). An S4 RNA-binding domain is found at 94-157 (MRLDNIVYRL…ASRDLVKKFV (64 aa)).

The protein belongs to the universal ribosomal protein uS4 family. As to quaternary structure, part of the 30S ribosomal subunit. Contacts protein S5. The interaction surface between S4 and S5 is involved in control of translational fidelity.

It localises to the plastid. The protein localises to the chloroplast. In terms of biological role, one of the primary rRNA binding proteins, it binds directly to 16S rRNA where it nucleates assembly of the body of the 30S subunit. Functionally, with S5 and S12 plays an important role in translational accuracy. This is Small ribosomal subunit protein uS4c (rps4) from Tupiella akineta (Green alga).